An 844-amino-acid chain; its full sequence is Elongation factor 2 (844 aa).

One can recognise a tr-type G domain in the interval 17–255 (TNVRNMSVIA…LWGDNYFNPK (239 aa)). 26–33 (AHVDHGKS) is a binding site for GTP. A phosphothreonine mark is found at threonine 57 and threonine 59. GTP contacts are provided by residues 160–163 (NKVD) and 215–217 (SGL). Position 700 is a diphthamide (histidine 700).

Belongs to the TRAFAC class translation factor GTPase superfamily. Classic translation factor GTPase family. EF-G/EF-2 subfamily.

The protein resides in the cytoplasm. It carries out the reaction GTP + H2O = GDP + phosphate + H(+). Its function is as follows. Catalyzes the GTP-dependent ribosomal translocation step during translation elongation. During this step, the ribosome changes from the pre-translocational (PRE) to the post-translocational (POST) state as the newly formed A-site-bound peptidyl-tRNA and P-site-bound deacylated tRNA move to the P and E sites, respectively. Catalyzes the coordinated movement of the two tRNA molecules, the mRNA and conformational changes in the ribosome. In Neurospora crassa (strain ATCC 24698 / 74-OR23-1A / CBS 708.71 / DSM 1257 / FGSC 987), this protein is Elongation factor 2 (cot-3).